The primary structure comprises 408 residues: Histidine--tRNA ligase (408 aa).

This sequence belongs to the class-II aminoacyl-tRNA synthetase family. Homodimer.

The protein resides in the cytoplasm. It catalyses the reaction tRNA(His) + L-histidine + ATP = L-histidyl-tRNA(His) + AMP + diphosphate + H(+). This Campylobacter jejuni subsp. doylei (strain ATCC BAA-1458 / RM4099 / 269.97) protein is Histidine--tRNA ligase.